A 78-amino-acid chain; its full sequence is Protein GPR15LG (78 aa).

Positions 1-24 (MRLLALSGLLCMLLLCFCIFSSEG) are cleaved as a signal peptide. Disulfide bonds link Cys-37–Cys-60 and Cys-38–Cys-57.

In terms of assembly, interacts with SUSD2; the interaction is direct. As to expression, highly abundant in the testis, colon, eye, and tongue. Detected in the epithelial layer of the colon, but not the small intestine.

It localises to the secreted. In terms of biological role, highly cationic protein that has multiple functions. Acts as a chemotactic factor that mediates lymphocytes recruitment to epithelia through binding and activation of the G-protein coupled receptor GPR15. May be a tumor suppressor; together with SUSD2 has a growth inhibitory effect on colon cancer cells which includes G1 cell cycle arrest. May regulate keratinocyte proliferation. In addition, through activation of Mas-related G protein-coupled receptors (MRGPRs) contributes to pruritogenesis by activating itch-selective sensory neurons and mast cells degranulation. Functionally, has antimicrobial activity against Gram-positive bacteria, including Staphylococcus aureus and Actinomyces spec., and Mycoplasma hominis and lentivirus. This is Protein GPR15LG (Gpr15lg) from Mus musculus (Mouse).